Reading from the N-terminus, the 464-residue chain is Protein FAM90A9 (464 aa).

Disordered stretches follow at residues 1-42 (MMAR…DPRL), 70-389 (PATL…HDGA), and 411-437 (APSF…SEAP). Basic and acidic residues-rich tracts occupy residues 74–89 (GKKE…KPRV) and 97–114 (NKDK…DPQR). The segment covering 180-197 (LASLSPLRKASLSSSSSL) has biased composition (low complexity).

Belongs to the FAM90 family.

This chain is Protein FAM90A9 (FAM90A9), found in Homo sapiens (Human).